We begin with the raw amino-acid sequence, 394 residues long: Elongation factor Tu (394 aa).

The tr-type G domain maps to 10–204 (KPHVNVGTIG…FLDSYIPEPE (195 aa)). A G1 region spans residues 19 to 26 (GHVDHGKT). 19–26 (GHVDHGKT) provides a ligand contact to GTP. A Mg(2+)-binding site is contributed by Thr26. Residues 60 to 64 (GITIN) are G2. A G3 region spans residues 81–84 (DCPG). Residues 81–85 (DCPGH) and 136–139 (NKCD) contribute to the GTP site. The tract at residues 136-139 (NKCD) is G4. A G5 region spans residues 174-176 (SAL).

This sequence belongs to the TRAFAC class translation factor GTPase superfamily. Classic translation factor GTPase family. EF-Tu/EF-1A subfamily. As to quaternary structure, monomer.

Its subcellular location is the cytoplasm. The catalysed reaction is GTP + H2O = GDP + phosphate + H(+). In terms of biological role, GTP hydrolase that promotes the GTP-dependent binding of aminoacyl-tRNA to the A-site of ribosomes during protein biosynthesis. The sequence is that of Elongation factor Tu from Salmonella arizonae (strain ATCC BAA-731 / CDC346-86 / RSK2980).